Reading from the N-terminus, the 574-residue chain is Arginine--tRNA ligase (574 aa).

The 'HIGH' region signature appears at 126–136 (PNIAKRMHVGH).

Belongs to the class-I aminoacyl-tRNA synthetase family. As to quaternary structure, monomer.

The protein localises to the cytoplasm. It catalyses the reaction tRNA(Arg) + L-arginine + ATP = L-arginyl-tRNA(Arg) + AMP + diphosphate. The sequence is that of Arginine--tRNA ligase from Chloroflexus aggregans (strain MD-66 / DSM 9485).